A 303-amino-acid polypeptide reads, in one-letter code: Target of rapamycin complex subunit LST8 (303 aa).

WD repeat units lie at residues 1-27, 30-68, 73-112, 114-153, 157-196, 205-244, and 248-287; these read MSVI…CSRT, HSDS…PNPV, GHRG…IPRN, KHNA…CTHQ, EDDT…DASH, AHST…KLET, and GHQR…IVRQ.

It belongs to the WD repeat LST8 family. The target of rapamycin complex 1 (TORC1) is composed of at least KOG1, LST8, TCO89 and either TOR1 (TORC1-A) or TOR2 (TORC1-B). TORC1 binds to and is inhibited by FKBP-rapamycin. Interacts with PIB2; following activation of PIB2 by glutamine or cysteine and as part of the TORC1 complex. The target of rapamycin complex 2 (TORC2) is composed of at least AVO1, AVO2, BIT61, LST8, TOR2 and TSC11. TORC2 forms a homodimer. Contrary to TORC1, TORC2 does not bind to and is not sensitive to FKBP-rapamycin. LST8 binds to the C-terminal kinase domain in TOR2.

Its subcellular location is the cell membrane. It localises to the vacuole membrane. Functionally, essential component of both TORC1 and TORC2. TORC1 regulates multiple cellular processes to control cell growth in response to environmental signals. Nutrient limitation and environmental stress signals cause inactivation of TORC1. Active TORC1 positively controls ribosome biogenesis via control of rRNA, ribosomal protein and tRNA gene expression, and rRNA processing. TORC1 positively controls protein biosynthesis by regulation of mRNA stability, translation initiation factor activity, and high-affinity amino acid permeases that serve to provide amino acids for use by the translation machinery. TORC1 also promotes growth by sequestering a number of nutrient and general stress-responsive transcription factors in the cytoplasm. TORC1 negatively controls macroautophagy, a process to recycle surplus cytoplasmic mass under nutrient starvation conditions. LST8 is involved in the negative regulation of transcription factors GLN3 and RTG1-RTG3, limiting the synthesis of alpha-ketoglutarate, glutamate and glutamine. LST8 is required for targeting of amino acid permeases (AAPs) to the plasma membrane. TORC2 regulates cell cycle-dependent polarization of the actin-cytoskeleton, cell wall integrity, and receptor endocytosis. TORC2 controls polarity of the actin cytoskeleton, which is required for orienting the secretory pathway toward discrete growth sites, via the RHO1/PKC1/MAPK cell integrity pathway. LST8 is involved in maintenance of cell wall integrity. LST8 modulates TOR2 kinase activity. This is Target of rapamycin complex subunit LST8 from Saccharomyces cerevisiae (strain ATCC 204508 / S288c) (Baker's yeast).